A 117-amino-acid chain; its full sequence is Large ribosomal subunit protein uL24 (117 aa).

Residues 1-10 (MSKQPRKQRK) are compositionally biased toward basic residues. The segment at 1 to 28 (MSKQPRKQRKALYNAPAHARGKHMSATL) is disordered.

The protein belongs to the universal ribosomal protein uL24 family. In terms of assembly, part of the 50S ribosomal subunit.

One of two assembly initiator proteins, it binds directly to the 5'-end of the 23S rRNA, where it nucleates assembly of the 50S subunit. Its function is as follows. Located at the polypeptide exit tunnel on the outside of the subunit. The protein is Large ribosomal subunit protein uL24 of Methanobrevibacter smithii (strain ATCC 35061 / DSM 861 / OCM 144 / PS).